A 384-amino-acid chain; its full sequence is Glucose-fructose oxidoreductase domain-containing protein 2 (384 aa).

A signal peptide spans 1–25 (MMTLPGIGVFGTGNTARVLIQLLRA). The interval 358 to 384 (GEWESVELTNEETDSNQNLSEVIQHNL) is disordered. The span at 372–384 (SNQNLSEVIQHNL) shows a compositional bias: polar residues.

This sequence belongs to the Gfo/Idh/MocA family.

The protein localises to the secreted. Its subcellular location is the extracellular space. It is found in the extracellular matrix. Promotes matrix assembly. In Xenopus laevis (African clawed frog), this protein is Glucose-fructose oxidoreductase domain-containing protein 2 (gfod2).